Here is a 137-residue protein sequence, read N- to C-terminus: MNNSLESTKQLLDVVKFDSNGLVPAIVQDVESGKVLMMAWMNRESLAMTLEKKVACYWSRSRKELWLKGETSGNMQQVHDVLIDCDGDTLLLKVSQKGGACHVGYHSCFYRKATENGSLEICDTLMFNPEEVYGKKS.

Asp84 serves as a coordination point for Mg(2+). Cys85 lines the Zn(2+) pocket. Residues Asp86 and Asp88 each contribute to the Mg(2+) site. The Zn(2+) site is built by Cys101 and Cys108.

This sequence belongs to the PRA-CH family. In terms of assembly, homodimer. Mg(2+) is required as a cofactor. The cofactor is Zn(2+).

The protein localises to the cytoplasm. It catalyses the reaction 1-(5-phospho-beta-D-ribosyl)-5'-AMP + H2O = 1-(5-phospho-beta-D-ribosyl)-5-[(5-phospho-beta-D-ribosylamino)methylideneamino]imidazole-4-carboxamide. The protein operates within amino-acid biosynthesis; L-histidine biosynthesis; L-histidine from 5-phospho-alpha-D-ribose 1-diphosphate: step 3/9. In terms of biological role, catalyzes the hydrolysis of the adenine ring of phosphoribosyl-AMP. This chain is Phosphoribosyl-AMP cyclohydrolase, found in Chlorobium chlorochromatii (strain CaD3).